Consider the following 275-residue polypeptide: NH(3)-dependent NAD(+) synthetase (275 aa).

46 to 53 provides a ligand contact to ATP; the sequence is GISGGQDS. A Mg(2+)-binding site is contributed by D52. R140 provides a ligand contact to deamido-NAD(+). T160 provides a ligand contact to ATP. E165 lines the Mg(2+) pocket. The deamido-NAD(+) site is built by K173 and D180. K189 and T211 together coordinate ATP. 260 to 261 contributes to the deamido-NAD(+) binding site; sequence HK.

It belongs to the NAD synthetase family. In terms of assembly, homodimer.

It catalyses the reaction deamido-NAD(+) + NH4(+) + ATP = AMP + diphosphate + NAD(+) + H(+). The protein operates within cofactor biosynthesis; NAD(+) biosynthesis; NAD(+) from deamido-NAD(+) (ammonia route): step 1/1. Its function is as follows. Catalyzes the ATP-dependent amidation of deamido-NAD to form NAD. Uses ammonia as a nitrogen source. The protein is NH(3)-dependent NAD(+) synthetase of Escherichia fergusonii (strain ATCC 35469 / DSM 13698 / CCUG 18766 / IAM 14443 / JCM 21226 / LMG 7866 / NBRC 102419 / NCTC 12128 / CDC 0568-73).